Reading from the N-terminus, the 78-residue chain is U-scoloptoxin(13)-Er1a (78 aa).

The first 24 residues, Met-1–Ala-24, serve as a signal peptide directing secretion.

Belongs to the scoloptoxin-13 family. Post-translationally, contains 4 disulfide bonds. As to expression, expressed by the venom gland.

The protein localises to the secreted. In Ethmostigmus rubripes (Giant centipede), this protein is U-scoloptoxin(13)-Er1a.